A 504-amino-acid chain; its full sequence is UDP-N-acetylmuramoylalanine--D-glutamate ligase (504 aa).

129–135 (GTNGKTT) lines the ATP pocket.

The protein belongs to the MurCDEF family.

It is found in the cytoplasm. It carries out the reaction UDP-N-acetyl-alpha-D-muramoyl-L-alanine + D-glutamate + ATP = UDP-N-acetyl-alpha-D-muramoyl-L-alanyl-D-glutamate + ADP + phosphate + H(+). It participates in cell wall biogenesis; peptidoglycan biosynthesis. Functionally, cell wall formation. Catalyzes the addition of glutamate to the nucleotide precursor UDP-N-acetylmuramoyl-L-alanine (UMA). This Burkholderia mallei (strain ATCC 23344) protein is UDP-N-acetylmuramoylalanine--D-glutamate ligase.